Reading from the N-terminus, the 509-residue chain is METVQMSLDLQPEDTKANIECSSPDYEIKCFSHNQFAPQIERLKIEKKYIHIVEETETFNRKLVSYQANKNQSIHNWIRYKEGFSSELVQNLIEEFGLSKGDTILDPFLGSGTTSLTAKMLGINSIGIDILPISHIAFEPKSFIFEYNLEELDRAYKEIYEISPTKIEQKFNHLSITEGAFPEETENDLLFFTHWDNNSQYSYQTKTLIKLILVSILEEISYTRKDGQYLRWDYRSQKVIETNKKRLEQGKEPIKTILDKGELPTVKESLLNTLLTIKEDIKEIQQKCLPNESVHELIKDSALNALPKINDNTFDAVITSPPYCNRYDYTRTYALELAYLGVDEKKIRELRQAQLSCTVENKSKLKQLKDYYHSLFLESRYAEIERLVTGNEVLNEINYALRKRWENGEVNNKGILSMVDGYFTELTFIFYELFRTCKPGAKVAFVNDNVRYAGEIIPVDFLSTKIAEDIGFKPIKIYTLKQRKGNSSQQMGKYGRVALRKSITIWEKP.

It belongs to the N(4)/N(6)-methyltransferase family. N(4) subfamily.

The catalysed reaction is a 2'-deoxycytidine in DNA + S-adenosyl-L-methionine = an N(4)-methyl-2'-deoxycytidine in DNA + S-adenosyl-L-homocysteine + H(+). In terms of biological role, an alpha subtype methylase that recognizes the double-stranded sequence 5'-CYCGRG-3', methylates C-1 on both strands, and protects the DNA from cleavage by the BsoBI endonuclease. The chain is Type II methyltransferase M.BsoBI from Geobacillus stearothermophilus (Bacillus stearothermophilus).